Reading from the N-terminus, the 104-residue chain is MTTSRKKTRNLREHVSVGHGRFGKHRKLPGSRGNAGVGMRYFHKLRNKFYCQIVNLDKLWSMVLGKGFLPENKPVVVKAKLVSNTDEKKIKEAGSAVVLTFLLY.

It belongs to the universal ribosomal protein uL15 family.

The polypeptide is Large ribosomal subunit protein uL15z (RPL27AA) (Arabidopsis thaliana (Mouse-ear cress)).